We begin with the raw amino-acid sequence, 387 residues long: Putative actin-29 (387 aa).

Belongs to the actin family.

The protein localises to the cytoplasm. It localises to the cytoskeleton. It carries out the reaction ATP + H2O = ADP + phosphate + H(+). In terms of biological role, actins are highly conserved proteins that are involved in various types of cell motility and are ubiquitously expressed in all eukaryotic cells. Multiple isoforms are involved in various cellular functions such as cytoskeleton structure, cell mobility, chromosome movement and muscle contraction. The sequence is that of Putative actin-29 (act29) from Dictyostelium discoideum (Social amoeba).